The primary structure comprises 120 residues: MAWTPLLLLFPLLLHCTGSLSQPVLTQSSSASASLGSSVKLTCTLSSGHSSYIIAWHQQQPGKAPRYLMKLEGSGSYNKGSGVPDRFSGSSSGADRYLTISNLQFEDEADYYCETWDSNT.

An N-terminal signal peptide occupies residues 1–21; the sequence is MAWTPLLLLFPLLLHCTGSLS. Residues 22–46 form a framework-1 region; sequence QPVLTQSSSASASLGSSVKLTCTLS. One can recognise an Ig-like domain in the interval 23–120; it reads PVLTQSSSAS…YYCETWDSNT (98 aa). A disulfide bond links Cys43 and Cys113. A complementarity-determining-1 region spans residues 47 to 53; it reads SGHSSYI. Residues 54-70 form a framework-2 region; that stretch reads IAWHQQQPGKAPRYLMK. A complementarity-determining-2 region spans residues 71 to 77; sequence LEGSGSY. The tract at residues 78-113 is framework-3; that stretch reads NKGSGVPDRFSGSSSGADRYLTISNLQFEDEADYYC. The interval 114-120 is complementarity-determining-3; the sequence is ETWDSNT.

As to quaternary structure, immunoglobulins are composed of two identical heavy chains and two identical light chains; disulfide-linked.

Its subcellular location is the secreted. The protein resides in the cell membrane. V region of the variable domain of immunoglobulin light chains that participates in the antigen recognition. Immunoglobulins, also known as antibodies, are membrane-bound or secreted glycoproteins produced by B lymphocytes. In the recognition phase of humoral immunity, the membrane-bound immunoglobulins serve as receptors which, upon binding of a specific antigen, trigger the clonal expansion and differentiation of B lymphocytes into immunoglobulins-secreting plasma cells. Secreted immunoglobulins mediate the effector phase of humoral immunity, which results in the elimination of bound antigens. The antigen binding site is formed by the variable domain of one heavy chain, together with that of its associated light chain. Thus, each immunoglobulin has two antigen binding sites with remarkable affinity for a particular antigen. The variable domains are assembled by a process called V-(D)-J rearrangement and can then be subjected to somatic hypermutations which, after exposure to antigen and selection, allow affinity maturation for a particular antigen. The sequence is that of Immunoglobulin lambda variable 4-60 from Homo sapiens (Human).